Consider the following 217-residue polypeptide: Adenylate kinase (217 aa).

10-15 (GAGKGT) provides a ligand contact to ATP. Residues 30–59 (STGDMLRAQVKAGTALGLEAKKHMDAGGLV) form an NMP region. AMP is bound by residues Thr31, Arg36, 57 to 59 (GLV), 85 to 88 (GFPR), and Gln92. Residues 122-159 (GRRAHLASGRTYHVKFNPPKVEGIDDVTGEPLVQRDDD) form an LID region. ATP is bound by residues Arg123 and 132-133 (TY). The AMP site is built by Arg156 and Arg167. Gly203 is an ATP binding site.

It belongs to the adenylate kinase family. In terms of assembly, monomer.

It localises to the cytoplasm. It carries out the reaction AMP + ATP = 2 ADP. Its pathway is purine metabolism; AMP biosynthesis via salvage pathway; AMP from ADP: step 1/1. Functionally, catalyzes the reversible transfer of the terminal phosphate group between ATP and AMP. Plays an important role in cellular energy homeostasis and in adenine nucleotide metabolism. This chain is Adenylate kinase, found in Dechloromonas aromatica (strain RCB).